A 917-amino-acid polypeptide reads, in one-letter code: von Willebrand factor A domain-containing protein DDB_G0285975 (917 aa).

The disordered stretch occupies residues 12 to 51 (DTTTTTTPTTPTTPTTPTTTPTTTTTPTTTPTTTTTSTTP). Positions 13–51 (TTTTTTPTTPTTPTTPTTTPTTTTTPTTTPTTTTTSTTP) are enriched in low complexity. The region spanning 87 to 215 (RYNTGLKNIS…NVTIHLTIIS (129 aa)) is the VIT domain. A VWFA domain is found at 339–507 (EFIFLIDCSG…NFEEQVMKLV (169 aa)). Residues 679 to 741 (LFSSENRNQT…INSIPQKSNI (63 aa)) enclose the t-SNARE coiled-coil homology domain. 2 stretches are compositionally biased toward low complexity: residues 751–760 (SPSEVSTSKS) and 774–818 (NNNN…NNNN). The segment at 751–822 (SPSEVSTSKS…NNNNNNSDNS (72 aa)) is disordered.

The chain is von Willebrand factor A domain-containing protein DDB_G0285975 from Dictyostelium discoideum (Social amoeba).